The primary structure comprises 506 residues: Maturase K (506 aa).

It belongs to the intron maturase 2 family. MatK subfamily.

Its subcellular location is the plastid. It is found in the chloroplast. In terms of biological role, usually encoded in the trnK tRNA gene intron. Probably assists in splicing its own and other chloroplast group II introns. This chain is Maturase K, found in Phyllodoce caerulea (Blue mountain heath).